Here is a 384-residue protein sequence, read N- to C-terminus: Succinyl-diaminopimelate desuccinylase (384 aa).

His-75 is a Zn(2+) binding site. Asp-77 is an active-site residue. Asp-108 contributes to the Zn(2+) binding site. Catalysis depends on Glu-142, which acts as the Proton acceptor. Residues Glu-143, Glu-171, and His-357 each coordinate Zn(2+).

It belongs to the peptidase M20A family. DapE subfamily. In terms of assembly, homodimer. It depends on Zn(2+) as a cofactor. The cofactor is Co(2+).

The catalysed reaction is N-succinyl-(2S,6S)-2,6-diaminopimelate + H2O = (2S,6S)-2,6-diaminopimelate + succinate. The protein operates within amino-acid biosynthesis; L-lysine biosynthesis via DAP pathway; LL-2,6-diaminopimelate from (S)-tetrahydrodipicolinate (succinylase route): step 3/3. In terms of biological role, catalyzes the hydrolysis of N-succinyl-L,L-diaminopimelic acid (SDAP), forming succinate and LL-2,6-diaminopimelate (DAP), an intermediate involved in the bacterial biosynthesis of lysine and meso-diaminopimelic acid, an essential component of bacterial cell walls. This Shewanella oneidensis (strain ATCC 700550 / JCM 31522 / CIP 106686 / LMG 19005 / NCIMB 14063 / MR-1) protein is Succinyl-diaminopimelate desuccinylase.